The following is a 181-amino-acid chain: uncharacterized protein (181 aa).

Residues M1–A23 form the signal peptide.

This is an uncharacterized protein from Bacillus subtilis (strain 168).